The following is a 342-amino-acid chain: UDP-xylose transporter 1 (342 aa).

A run of 10 helical transmembrane segments spans residues 7–27, 36–56, 75–95, 100–120, 132–152, 154–174, 184–204, 221–241, 250–270, and 280–300; these read MQMG…SIVI, LGFP…YCTL, VVLF…SLGF, FYQM…TLFL, LFLL…LNFV, SVLS…TNTI, QLLY…GPFV, IVVG…FSTF, VTYQ…GYTL, and IAGI…CSVA. Residues 305-342 form a disordered region; sequence QASSDSTFLGKDRDTTPLLGQENENHHEAKKLDKHSPV. A compositionally biased stretch (basic and acidic residues) spans 327–342; sequence NENHHEAKKLDKHSPV.

Belongs to the TPT transporter family. TPT (TC 2.A.7.9) subfamily. As to expression, ubiquitous.

It localises to the golgi apparatus membrane. It is found in the endoplasmic reticulum membrane. Its function is as follows. Nucleotide-sugar transporter that transports UDP-xylose and UMP in a strict counter-exchange mode. The polypeptide is UDP-xylose transporter 1 (Arabidopsis thaliana (Mouse-ear cress)).